A 381-amino-acid chain; its full sequence is Chaperone protein DnaJ (381 aa).

One can recognise a J domain in the interval 5–70 (DYYEVLGVSR…DKKAAYDRYG (66 aa)). The CR-type zinc-finger motif lies at 140 to 218 (GVQKTINVPA…CHGAGRVEKE (79 aa)). Cysteine 153, cysteine 156, cysteine 170, cysteine 173, cysteine 192, cysteine 195, cysteine 206, and cysteine 209 together coordinate Zn(2+). CXXCXGXG motif repeat units follow at residues 153–160 (CDACKGTG), 170–177 (CPTCSGMG), 192–199 (CPTCNGMG), and 206–213 (CKVCHGAG).

It belongs to the DnaJ family. As to quaternary structure, homodimer. Zn(2+) serves as cofactor.

It is found in the cytoplasm. In terms of biological role, participates actively in the response to hyperosmotic and heat shock by preventing the aggregation of stress-denatured proteins and by disaggregating proteins, also in an autonomous, DnaK-independent fashion. Unfolded proteins bind initially to DnaJ; upon interaction with the DnaJ-bound protein, DnaK hydrolyzes its bound ATP, resulting in the formation of a stable complex. GrpE releases ADP from DnaK; ATP binding to DnaK triggers the release of the substrate protein, thus completing the reaction cycle. Several rounds of ATP-dependent interactions between DnaJ, DnaK and GrpE are required for fully efficient folding. Also involved, together with DnaK and GrpE, in the DNA replication of plasmids through activation of initiation proteins. In Cereibacter sphaeroides (strain KD131 / KCTC 12085) (Rhodobacter sphaeroides), this protein is Chaperone protein DnaJ.